Consider the following 247-residue polypeptide: Small ribosomal subunit protein uS3 (247 aa).

In terms of domain architecture, KH type-2 spans 38-106; the sequence is IRDFLSEGLD…QVQLNILEVK (69 aa). Over residues 214–226 the composition is skewed to basic and acidic residues; that stretch reads SLMNARDERPSRG. Residues 214–247 are disordered; that stretch reads SLMNARDERPSRGRRERPRRGGARRQRAEQKQEG. Over residues 227-238 the composition is skewed to basic residues; that stretch reads RRERPRRGGARR.

It belongs to the universal ribosomal protein uS3 family. Part of the 30S ribosomal subunit. Forms a tight complex with proteins S10 and S14.

Functionally, binds the lower part of the 30S subunit head. Binds mRNA in the 70S ribosome, positioning it for translation. The protein is Small ribosomal subunit protein uS3 of Corynebacterium jeikeium (strain K411).